A 428-amino-acid chain; its full sequence is Histidinol dehydrogenase (428 aa).

Ser234, Gln256, and His259 together coordinate substrate. Zn(2+) is bound by residues Gln256 and His259. Residues Glu323 and His324 each act as proton acceptor in the active site. Residues His324, Asp357, Glu411, and His416 each contribute to the substrate site. Asp357 contributes to the Zn(2+) binding site. A Zn(2+)-binding site is contributed by His416.

This sequence belongs to the histidinol dehydrogenase family. Requires Zn(2+) as cofactor.

The catalysed reaction is L-histidinol + 2 NAD(+) + H2O = L-histidine + 2 NADH + 3 H(+). The protein operates within amino-acid biosynthesis; L-histidine biosynthesis; L-histidine from 5-phospho-alpha-D-ribose 1-diphosphate: step 9/9. In terms of biological role, catalyzes the sequential NAD-dependent oxidations of L-histidinol to L-histidinaldehyde and then to L-histidine. This Campylobacter jejuni (strain RM1221) protein is Histidinol dehydrogenase.